Consider the following 443-residue polypeptide: Thymidine phosphorylase (443 aa).

This sequence belongs to the thymidine/pyrimidine-nucleoside phosphorylase family. Homodimer.

It carries out the reaction thymidine + phosphate = 2-deoxy-alpha-D-ribose 1-phosphate + thymine. Its pathway is pyrimidine metabolism; dTMP biosynthesis via salvage pathway; dTMP from thymine: step 1/2. Its function is as follows. The enzymes which catalyze the reversible phosphorolysis of pyrimidine nucleosides are involved in the degradation of these compounds and in their utilization as carbon and energy sources, or in the rescue of pyrimidine bases for nucleotide synthesis. The polypeptide is Thymidine phosphorylase (Shewanella halifaxensis (strain HAW-EB4)).